The following is a 53-amino-acid chain: UPF0337 protein LJ_0034.1 (53 aa).

The disordered stretch occupies residues 27-53 (AREVEGKAQQAKGKVKSKATEVKEDLE). A compositionally biased stretch (basic and acidic residues) spans 44-53 (KATEVKEDLE).

This sequence belongs to the UPF0337 (CsbD) family.

In Lactobacillus johnsonii (strain CNCM I-12250 / La1 / NCC 533), this protein is UPF0337 protein LJ_0034.1.